A 274-amino-acid polypeptide reads, in one-letter code: Membrane protein insertase YidC 2 (274 aa).

The first 20 residues, 1 to 20 (MKKKLKLTSLLGLSLLIMTA), serve as a signal peptide directing secretion. Cys21 carries the N-palmitoyl cysteine lipid modification. A lipid anchor (S-diacylglycerol cysteine) is attached at Cys21. 4 helical membrane-spanning segments follow: residues 56 to 76 (ISIG…LLPV), 128 to 148 (SDSL…FQAL), 167 to 187 (VDTT…STWL), and 205 to 225 (GIPV…ALYW).

Belongs to the OXA1/ALB3/YidC family. Type 2 subfamily.

The protein resides in the cell membrane. Its function is as follows. Required for the insertion and/or proper folding and/or complex formation of integral membrane proteins into the membrane. Involved in integration of membrane proteins that insert both dependently and independently of the Sec translocase complex, as well as at least some lipoproteins. The protein is Membrane protein insertase YidC 2 of Streptococcus pneumoniae serotype 4 (strain ATCC BAA-334 / TIGR4).